The primary structure comprises 111 residues: 4'-hydroxy-3'-methoxypropiophenone carrier protein ppsC (111 aa).

A disordered region spans residues 1-21; it reads MSAQVMRPGTPQHEGQEFLSG.

It functions in the pathway secondary metabolite biosynthesis. Functionally, 4'-hydroxy-3'-methoxypropiophenone carrier protein; part of the gene cluster that mediates the biosynthesis of 2,4'-dihydroxy-3'-methoxypropiophenone. The first step of the pathway is the conversion of acetate into acetyl-CoA by the acyl-CoA ligase ppsA. Acetyl-CoA is then used as a starter unit by the polyketide synthase ppsB and condensed with 4 malonyl-CoA unit to produce the pentaketide backbone. During polyketide extension, the polykedite chain is probably reduced and dehydrated by the KR and PT domains, respectively. O-methylation seems to be catalyzed by an unknown methyltransferase rather than by the CMeT domain of ppsB. Two hydroxylations and one further decarboxylation step catalyzed by yet unknown enzymes are then required to yield 4'-hydroxy-3'-methoxypropiophenone. PpsC functions as a carrier protein to transport 4'-hydroxy-3'-methoxypropiophenone to a specific cell compartment in which 4'-hydroxy-3'-methoxypropiophenone is hydroxylated to 2,4'-dihydroxy-3'-methoxypropiophenone by a still to be identified enzyme. In Aspergillus oryzae (strain ATCC 42149 / RIB 40) (Yellow koji mold), this protein is 4'-hydroxy-3'-methoxypropiophenone carrier protein ppsC.